A 177-amino-acid polypeptide reads, in one-letter code: NAD(P)H-quinone oxidoreductase subunit 6, chloroplastic (177 aa).

5 helical membrane-spanning segments follow: residues 10–30 (ILVVFLGLVLILGGLGVVLFT), 33–53 (IYSAFSLGLVLICVSLFYILL), 61–81 (AQLLIYVGAINVLILFAVMFM), 92–112 (LWTVGDGVTSLVCTSILFLLI), and 152–172 (FFLPFELISIILLVALIGAIS).

The protein belongs to the complex I subunit 6 family. In terms of assembly, NDH is composed of at least 16 different subunits, 5 of which are encoded in the nucleus.

The protein resides in the plastid. It is found in the chloroplast thylakoid membrane. The catalysed reaction is a plastoquinone + NADH + (n+1) H(+)(in) = a plastoquinol + NAD(+) + n H(+)(out). It carries out the reaction a plastoquinone + NADPH + (n+1) H(+)(in) = a plastoquinol + NADP(+) + n H(+)(out). In terms of biological role, NDH shuttles electrons from NAD(P)H:plastoquinone, via FMN and iron-sulfur (Fe-S) centers, to quinones in the photosynthetic chain and possibly in a chloroplast respiratory chain. The immediate electron acceptor for the enzyme in this species is believed to be plastoquinone. Couples the redox reaction to proton translocation, and thus conserves the redox energy in a proton gradient. This Lemna minor (Common duckweed) protein is NAD(P)H-quinone oxidoreductase subunit 6, chloroplastic (ndhG).